Reading from the N-terminus, the 334-residue chain is Syntaxin-18 (334 aa).

The Cytoplasmic segment spans residues 1–308 (MAVDITLLFR…EDIREAIKNN (308 aa)). 2 disordered regions span residues 29–50 (GGAD…GDFS) and 166–225 (LSKL…GEDE). Basic and acidic residues-rich tracts occupy residues 33–50 (GSRD…GDFS) and 166–182 (LSKL…DSTS). The span at 183–192 (EKAPQNASQD) shows a compositional bias: polar residues. A compositionally biased stretch (basic and acidic residues) spans 193 to 207 (SEGKPAAEELPEKPL). In terms of domain architecture, t-SNARE coiled-coil homology spans 242-304 (IGEMNSLFDE…KEGNEDIREA (63 aa)). The chain crosses the membrane as a helical; Anchor for type IV membrane protein span at residues 309 to 329 (AGFRVWILFFLVMCSFSLLFL). Over 330–334 (DWYDS) the chain is Lumenal.

This sequence belongs to the syntaxin family. As to quaternary structure, component of a SNARE complex consisting of STX18, USE1L, BNIP1/SEC20L, and SEC22B. RINT1/TIP20L and ZW10 are associated with the complex through interaction with BNIP1/SEC20L. Interacts directly with USE1L and BNIP1/SEC20L.

The protein resides in the endoplasmic reticulum membrane. It is found in the golgi apparatus membrane. Functionally, syntaxin that may be involved in targeting and fusion of Golgi-derived retrograde transport vesicles with the ER. This is Syntaxin-18 (Stx18) from Mus musculus (Mouse).